Consider the following 262-residue polypeptide: Adenosylcobinamide-GDP ribazoletransferase (262 aa).

The next 6 membrane-spanning stretches (helical) occupy residues 43–63 (YFGL…WLTQ), 66–86 (LPAG…TGGF), 120–140 (GALA…ELAL), 146–166 (AGSA…SIIF), 191–211 (LLIL…LAAL), and 242–262 (AAQQ…GNIL).

It belongs to the CobS family. It depends on Mg(2+) as a cofactor.

Its subcellular location is the cell inner membrane. The catalysed reaction is alpha-ribazole + adenosylcob(III)inamide-GDP = adenosylcob(III)alamin + GMP + H(+). It catalyses the reaction alpha-ribazole 5'-phosphate + adenosylcob(III)inamide-GDP = adenosylcob(III)alamin 5'-phosphate + GMP + H(+). The protein operates within cofactor biosynthesis; adenosylcobalamin biosynthesis; adenosylcobalamin from cob(II)yrinate a,c-diamide: step 7/7. Its function is as follows. Joins adenosylcobinamide-GDP and alpha-ribazole to generate adenosylcobalamin (Ado-cobalamin). Also synthesizes adenosylcobalamin 5'-phosphate from adenosylcobinamide-GDP and alpha-ribazole 5'-phosphate. This chain is Adenosylcobinamide-GDP ribazoletransferase, found in Shewanella baltica (strain OS195).